The chain runs to 453 residues: 5-hydroxytryptamine receptor 1 (453 aa).

Residues 1–36 (MKSLKSSTHDVPHPEHVVWAPPAYDEQHHLFFSHGT) are Extracellular-facing. Residues 37–57 (VLIGIVGSLIITVAVVGNVLV) form a helical membrane-spanning segment. Residues 58-74 (CLAIFTEPILSHSKSNF) are Cytoplasmic-facing. A helical membrane pass occupies residues 75-94 (FIVSLAVADLLLALLVMTFA). Residues 95–110 (LVNDMYGYWLFGETFC) lie on the Extracellular side of the membrane. Cys-110 and Cys-225 are joined by a disulfide. A helical transmembrane segment spans residues 111–133 (FIWMSADVMCETASIFSICVISY). The Cytoplasmic portion of the chain corresponds to 134–153 (DRLKQVQKPLHYEEFMTTTR). Residues 154-175 (ALLIIACLWICSFVLSFVPIFL) form a helical membrane-spanning segment. Residues 176–223 (EWHELSVEEIKAIFKDNKTEKEKALEAHNFSSALNQTLGDNQKSNAKH) lie on the Extracellular side of the membrane. The chain crosses the membrane as a helical span at residues 224 to 244 (VCLFDVHFTYSVIYSFICFYV). Topologically, residues 245–301 (PCTLMLTNYLRLFLIAQTHQVRIRSLQMTNPPQLRGQGASSYRNQGTQGSKAARTLT) are cytoplasmic. Residues 302–322 (IITGTFLACWLPFFIINPIAA) traverse the membrane as a helical segment. Topologically, residues 323-331 (ADEHLIPLE) are extracellular. A helical transmembrane segment spans residues 332-352 (CFMVTIWLGYFNSSVNPIIYG). Over 353-453 (TSNSKFRAAF…VFDSDTAFSS (101 aa)) the chain is Cytoplasmic. The disordered stretch occupies residues 397 to 428 (DLSSSEHPSDACDTGRGKNSKGGDCATADPTK). Over residues 403-412 (HPSDACDTGR) the composition is skewed to basic and acidic residues.

This sequence belongs to the G-protein coupled receptor 1 family. Reproductive system.

It is found in the cell membrane. In terms of biological role, this is one of the several different receptors for 5-hydroxytryptamine (serotonin). 5-HT plays important roles in various behavioral and physiological processes in aplysia. These include feeding, locomotion, circadian rhythm, learning and memory, synaptic plasticity, and synaptic growth. This receptor is mediated by G proteins that stimulate phospholipase C. The polypeptide is 5-hydroxytryptamine receptor 1 (5HTB1) (Aplysia californica (California sea hare)).